A 2259-amino-acid chain; its full sequence is MKQELSKNKYLYKRLKLEEIQNPRYFFEVWSESNLVKFLIRIFFNKENFIKLFDFRIISSLILQDLHSSKSNKSSILKTFLLLTLSVFLYHLNNKAIIEKKHLNLVKIVYGHINYSKYKEKNLKENFNKKNISTFTNHSLSKILSLKKKKKYSIIKTNLKKRIHAISTYNQNLVGDSEWWKLCIIEQILPSWKISSSSIKKVEILLKEKTTDDLKHFFEFYIDNILCQNYNWETKFNFIFCKTIKNNKKLNLSTDNKILTNSLIFQIFSAFCEKLLFEIENPLNLNQLNSTIKLKNNQLFFSFSKSYQKKNSVELLYLLKKNVSQNFKFWGENDSLIVKSYIFIKKKGWFFFNNYAEFYIWQLYKNSLVQYEDDLDNFNENKSNLKLFKLNFLQNKKKNLKINSDLSEISYQITKYILYKVKNSNKAINNYKIIDKNFKFGNKKKTEIKKTLNLVETNFFISNKNFFKWILYKKNLNNKNVKQNIDSTIWDLCFFFKNENNKIKSNFFLSPFFKKYLLYWIKNLFREEEKYITNPNFFENKKNLNFSNNSFSNSLFIDELNMAFSLTKKYRKNFEIIKQQKNKFFRNRKKSDIHRLIRLCKIKKTYQKLNSFIFSDYFYKIIYKKKYDINNLNLSTNLKLYTNHFYLLKSLINNHFNIEKYNKFLLFQIKYFVNLIISLDQINLLIIKQNLLFSKKINNDIHYQTNENFKLKKKLLVNKIIYKKTKIYLKYDLKKKFQSYNFVTNSFIKNRISYKYIYNNYYKNLTESLNHLLLIFSSDKKINLKNITKNIIDQKIVNWKKKGKSYFSYKIIKKNIFNYWKYNKYKLIDKKNKNKNTFKFFIKKQRNLIVLSNKTKFIDNKNSIIKWSKKLNKKNTYIFYKTFLVIFYENFNNISKLLLYYSKIFNIQNNFLKKKLNETNLVQQIKFNIYYKLKIHFYFDKILTTKFLINYFNNNQIYLESFNNNIFSLILQNQKSYFNSIQMSDKILLNSQFCKADTSKLVSFLYYSDLNYKKKLNFYLKKKKSNLSYLELIKIFSIKKKKTLSTNELTFFSKILNENSNIELKIYKTFLFEKLEQFNNENLLFIHNFNLNKLANSFVSFNPIFSTKKYLEKNISLQKSLKKNNDFYPIDSSENYLLSEFFIKIQNENTRIINKINKLFIINSNSEKFLINNILKKNTNNKKFNSETNKKRILSFSKNSIKLIPQTERFKIFKNSSFSLKLSSLFEKYIPWFFTFKWWKYFQNLFLNLYLEISLNISDQFYYILPTILQNRKKNLDYLVENLFFNLKNKFFGNSFGIWNSRLLKQINKQHKSKENQLPWFSLNLVNKWNRHYVVTISLVIFSYFILQKYFSILLGSDYLELWADFKIIQYLVDSSRGIYLDNLLHNNSIKFIKSENLLIHFFKNSKHYIKNIKFYLFTKKKINKLLIKNKGIDLSRRERKLLVQSLITDKSIDRYRPNFIYNTNSTNFQFGNQIIKQQKIKNYLENLTEDYQKNLINYPSHQFYLAENLVFLSSWQKATSLNTLWQINTLKSTFYKKPIPLELRLFSSKGILLIGSQETGRSYLVKNLAANSFIPLIKISINKLLYNKPDILTESWINILMESLRRLNLILELAEKLSPCIIWMPNIHELNVNRSTQNVESDPTFLLGIFLKYFQTGFSKKNTNNIIIIGSTHLPKKVDPALISPNRLDRLINIRTFNILQRQKKISILLYSKYSKYFYSKKKKSSLNEFGSRTIGYNARDLAGLINEILLISINQNQSTIQKKTIRLAFHRQTLGSTYINNKINFTKNYGILFYKIGKAIVQNLFIKNSSKNPLYFGNDLWKKNFYYLSKWYLEPSIFESTIKEFTILPHILGCLAGLAARDSWFILKNKPDNLISLDKYAENDFYLACGILESLLRDFSWLEIFEEKNINKKNFFNFQFQTKNPLHMVKKGLYQLTSNIVWAPKISRLNFIRTNLFNWINRPNEFEITSNLKKADKKNITGSSDNSHSFEIIQHKIKEQLPYERILSRIRRRNVQELESQLEDILLEEQFVILGFSRLFTEYRMESQLSNKPLIFIGGRFLWDPTGLLYQNHNFIFSRQDLSIDGEMLRRLYVTYGARREREKSRSSQKIKQFFLRRGYGRDSINNFSINWWNQLPFIEKNNIETFKRIEGIGVQLKRPQVFTPVYLYQRWLIENPQKILTRFELLNNQQKWLKTNKLLLNDSLIYNTLLEIYQYLLQFFILHQVLLNEMTNVLLKNKWLFQNEIEDFMNIINKNN.

1556–1563 lines the ATP pocket; that stretch reads GSQETGRS.

The protein belongs to the Ycf2 family.

The protein resides in the plastid. It localises to the chloroplast stroma. Its function is as follows. Probable ATPase of unknown function. Its presence in a non-photosynthetic plant (Epifagus virginiana) and experiments in tobacco indicate that it has an essential function which is probably not related to photosynthesis. The protein is Protein Ycf2 of Physcomitrium patens (Spreading-leaved earth moss).